Consider the following 394-residue polypeptide: MFRHVAQNLGSRNTSIQSYRLLRTRWERGYLKDLYHRRQILGADPAISRSSYPNWDYDSELYAFGHRIGAPEISEDQYIKALTNESFFQRADVEENVESAQPGAEVGTEHNAELVKRGEQNLSIWLKRYLRFHLAKAPEELIEAIDSHLLDDECLAGIASHLGIDHLVRTKEFPISQESSADAFRALAGVFSDEKVKNLVIDFIVPQLVDIDFADIYPLADPLAVVTDLLKSNGVTEIEPRVLRSAGENSAEPIYVVAIYADKLKNVGQSAGESLAIAVDMAAREALLRLWDITSEKVLFFGDRAANVPLERYSQPNFSLSQKCSPGTNTNIIDHSQPVESPDNLIEAVLRYRNVVDAEVGKSYTKRLRHKFSRGSLAKRSFRYLVKPKPYTVA.

A mitochondrion-targeting transit peptide spans 1-21; that stretch reads MFRHVAQNLGSRNTSIQSYRL.

This sequence belongs to the ribonuclease III family. Mitochondrion-specific ribosomal protein mL44 subfamily. Component of the mitochondrial large ribosomal subunit (mt-LSU).

It is found in the mitochondrion. Functionally, component of the mitochondrial ribosome. May have a function in the assembly/stability of nascent mitochondrial polypeptides exiting the ribosome. This chain is Large ribosomal subunit protein mL44, found in Caenorhabditis elegans.